A 956-amino-acid polypeptide reads, in one-letter code: MTLLLLPLLLASLLASCSCNKANKHKPWIEAEYQGIVMENDNTVLLNPPLFALDKDAPLRYAGEICGFRLHGSGVPFEAVILDKATGEGLIRAKEPVDCEAQKEHTFTIQAYDCGEGPDGANTKKSHKATVHVRVNDVNEFAPVFVERLYRAAVTEGKLYDRILRVEAIDGDCSPQYSQICYYEILTPNTPFLIDNDGNIENTEKLQYSGERLYKFTVTAYDCGKKRAADDAEVEIQVKPTCKPSWQGWNKRIEYAPGAGSLALFPGIRLETCDEPLWNIQATIELQTSHVAKGCDRDNYSERALRKLCGAATGEVDLLPMPGPNANWTAGLSVHYSQDSSLIYWFNGTQAVQVPLGGPSGLGSGPQDSLSDHFTLSFWMKHGVTPNKGKKEEETIVCNTVQNEDGFSHYSLTVHGCRIAFLYWPLLESARPVKFLWKLEQVCDDEWHHYALNLEFPTVTLYTDGISFDPALIHDNGLIHPPRREPALMIGACWTEEKNKEKEKGDNSTDTTQGDPLSIHHYFHGYLAGFSVRSGRLESREVIECLYACREGLDYRDFESLGKGMKVHVNPSQSLLTLEGDDVETFNHALQHVAYMNTLRFATPGVRPLRLTTAVKCFSEESCVSIPEVEGYVVVLQPDAPQILLSGTAHFARPAVDFEGTNGVPLFPDLQITCSISHQVEAKKDESWQGTVTDTRMSDEIVHNLDGCEISLVGDDLDPERESLLLDTTSLQQRGLELTNTSAYLTIAGVESITVYEEILRQARYRLRHGAALYTRKFRLSCSEMNGRYSSNEFIVEVNVLHSMNRVAHPSHVLSSQQFLHRGHQPPPEMAGHSLASSHRNSMIPSAATLIIVVCVGFLVLMVVLGLVRIHSLHRRVSGAGGPPGASSDPKDPDLFWDDSALTIIVNPMESYQNRQSCVTGAVGGQQEDEDSSDSEVADSPSSDERRIIETPPHRY.

The first 19 residues, 1-19 (MTLLLLPLLLASLLASCSC), serve as a signal peptide directing secretion. At 1 to 30 (MTLLLLPLLLASLLASCSCNKANKHKPWIE) the chain is on the cytoplasmic side. Residues 20-847 (NKANKHKPWI…SHRNSMIPSA (828 aa)) lie on the Extracellular side of the membrane. Cadherin domains are found at residues 29–145 (IEAE…APVF) and 146–246 (VERL…KPSW). The helical intramembrane region spans 31–51 (AEYQGIVMENDNTVLLNPPLF). Residues 52-71 (ALDKDAPLRYAGEICGFRLH) lie on the Cytoplasmic side of the membrane. The segment at residues 72 to 94 (GSGVPFEAVILDKATGEGLIRAK) is an intramembrane region (helical). The Cytoplasmic portion of the chain corresponds to 95 to 151 (EPVDCEAQKEHTFTIQAYDCGEGPDGANTKKSHKATVHVRVNDVNEFAPVFVERLYR). The helical intramembrane region spans 152–172 (AAVTEGKLYDRILRVEAIDGD). Over 173–255 (CSPQYSQICY…WQGWNKRIEY (83 aa)) the chain is Cytoplasmic. A helical transmembrane segment spans residues 256–276 (APGAGSLALFPGIRLETCDEP). Topologically, residues 277–364 (LWNIQATIEL…PLGGPSGLGS (88 aa)) are lumenal. Asn299, Asn327, Asn347, Asn507, and Asn740 each carry an N-linked (GlcNAc...) asparagine glycan. The chain crosses the membrane as a helical span at residues 848-868 (ATLIIVVCVGFLVLMVVLGLV). The Cytoplasmic segment spans residues 869-956 (RIHSLHRRVS…RIIETPPHRY (88 aa)). A disordered region spans residues 916-956 (QSCVTGAVGGQQEDEDSSDSEVADSPSSDERRIIETPPHRY). The segment covering 927 to 937 (QEDEDSSDSEV) has biased composition (acidic residues). Positions 943–956 (SDERRIIETPPHRY) are enriched in basic and acidic residues.

It belongs to the calsyntenin family. Interacts (via cadherin domains) with both alpha and beta isoforms of neurexins (NRXN1, NRXN2 and NRXN3). Directly interacts with APBA2. Forms a tripartite complex with APBA2 and APP. Interacts with low affinity with KLC1. Interacts with SLC23A2/SVCT2. As to quaternary structure, interacts with CIDEA; inhibiting the lipid transferase activity of CIDEA. Interacts with CIDEC; inhibiting the lipid transferase activity of CIDEC. Proteolytically processed under normal cellular conditions. A primary zeta-cleavage generates a large extracellular (soluble) N-terminal domain (sAlc) and a short C-terminal transmembrane fragment (CTF1). A secondary cleavage catalyzed by gamma-secretase within the transmembrane domain releases the beta-Alc-beta chain in the extracellular milieu and produces an intracellular fragment (AlcICD). This processing is strongly suppressed in the tripartite complex formed with APBA2 and APP, which seems to prevent the association with gamma-secretase. Post-translationally, ubiquitinated: endoplasmic reticulum-localized protein is ubiquitinated and degraded by the endoplasmic reticulum-associated degradation (ERAD) pathway. According to PubMed:12498782, expressed predominantly in the brain and in kidney. Low levels in heart, skeletal muscle, liver, placenta, pancreas and lung. According to PubMed:12972431, predominant expression in brain, and only marginal in kidney. In brain, present throughout all cortical layers, highest levels in GABAergic neurons (based on morphology and distribution pattern). In terms of tissue distribution, expression is restricted to adipose tissue, with high expression in multilocular thermogenic adipocytes (brown adipose tissue).

It is found in the postsynaptic cell membrane. It localises to the endoplasmic reticulum membrane. The protein localises to the golgi apparatus membrane. The protein resides in the cell projection. Its subcellular location is the dendrite. It is found in the lipid droplet. In terms of biological role, postsynaptic adhesion molecule that binds to presynaptic neurexins to mediate both excitatory and inhibitory synapse formation. Promotes synapse development by acting as a cell adhesion molecule at the postsynaptic membrane, which associates with both neurexin-alpha and neurexin-beta proteins at the presynaptic membrane. Regulates the balance between excitatory and inhibitory synapses by inhibiting formation of excitatory parallel-fiber synapses and promoting formation of inhibitory synapses in the same neuron. May also be involved in ascorbate (vitamin C) uptake via its interaction with SLC23A2/SVCT2. Complex formation with APBA2 and APP, stabilizes APP metabolism and enhances APBA2-mediated suppression of beta-APP40 secretion, due to the retardation of intracellular APP maturation. Adipose-specific isoform that plays a key role in adaptive thermogenesis. Facilitates the efficient use of stored triglyceride by promoting multilocular morphology of thermogenic adipocytes: acts by inhibiting the activity of CIDEA and CIDEC on lipid droplets, thereby preventing lipid droplet fusion and facilitating lipid utilization. May also participate in adaptive thermogenesis by promoting sympathetic innervation of thermogenic adipose tissue: acts by driving secretion of neurotrophic factor S100B from brown adipocytes, stimulating neurite outgrowth from sympathetic neurons. This Homo sapiens (Human) protein is Calsyntenin-3.